The sequence spans 207 residues: Abscisic acid receptor PYL9 (207 aa).

The tract at residues 31–197 (FPPSTTTATT…NLQMLAAVAE (167 aa)) is START-like. Abscisate contacts are provided by residues lysine 74, 104 to 109 (ASTSTE), 131 to 137 (RLRNYRS), and glutamate 162. Residues 100 to 104 (SGLPA) carry the Gate loop motif. Residues 130-132 (HRL) carry the Latch loop motif.

It belongs to the PYR/PYL/RCAR abscisic acid intracellular receptor family. Homodimer. Interacts with PP2C06. Interacts with PP2C50. Binding to PP2C50 is dependent on the presence of abscisic acid (ABA). Interacts with PP2C30 and PP2C53. Binding to PP2C30 and PP2C53 is dependent on the presence of ABA.

Its subcellular location is the cytoplasm. It is found in the cytosol. The protein localises to the nucleus. Involved in abscisic acid (ABA) signaling during seed germination and abiotic stress response. Acts as a positive regulator of ABA-mediated inhibition of seed germination, and tolerance to drought and cold stresses. Inhibits the activity of the protein phosphatases PP2C06 and PP2C09 when activated by abscisic acid (ABA). This chain is Abscisic acid receptor PYL9, found in Oryza sativa subsp. japonica (Rice).